We begin with the raw amino-acid sequence, 793 residues long: Phenylalanine--tRNA ligase beta subunit (793 aa).

A tRNA-binding domain is found at 40 to 159; it reads SKLNTKLVIG…MDEMVGREIS (120 aa). Positions 401–476 constitute a B5 domain; it reads NYDNVYSITL…RLYGYDNIIE (76 aa). Mg(2+) is bound by residues Asp454, Asp460, Glu463, and Glu464. An FDX-ACB domain is found at 701 to 793; sequence SKFQKSTRDI…NLKELKVKVR (93 aa).

Belongs to the phenylalanyl-tRNA synthetase beta subunit family. Type 1 subfamily. Tetramer of two alpha and two beta subunits. Mg(2+) serves as cofactor.

The protein localises to the cytoplasm. It carries out the reaction tRNA(Phe) + L-phenylalanine + ATP = L-phenylalanyl-tRNA(Phe) + AMP + diphosphate + H(+). The polypeptide is Phenylalanine--tRNA ligase beta subunit (Mesoplasma florum (strain ATCC 33453 / NBRC 100688 / NCTC 11704 / L1) (Acholeplasma florum)).